A 376-amino-acid polypeptide reads, in one-letter code: Aspartate-semialdehyde dehydrogenase (376 aa).

Residues 11 to 14 (RGMV), 38 to 39 (TS), and glutamine 74 each bind NADP(+). Arginine 103 lines the phosphate pocket. Catalysis depends on cysteine 136, which acts as the Acyl-thioester intermediate. Glutamine 163 contributes to the substrate binding site. NADP(+)-binding positions include 166-167 (SG) and proline 194. Glutamate 242 contributes to the substrate binding site. Lysine 245 is a phosphate binding site. Substrate is bound at residue arginine 273. Histidine 280 (proton acceptor) is an active-site residue. NADP(+) is bound at residue glutamine 356.

Belongs to the aspartate-semialdehyde dehydrogenase family. In terms of assembly, homodimer.

It catalyses the reaction L-aspartate 4-semialdehyde + phosphate + NADP(+) = 4-phospho-L-aspartate + NADPH + H(+). Its pathway is amino-acid biosynthesis; L-lysine biosynthesis via DAP pathway; (S)-tetrahydrodipicolinate from L-aspartate: step 2/4. It participates in amino-acid biosynthesis; L-methionine biosynthesis via de novo pathway; L-homoserine from L-aspartate: step 2/3. It functions in the pathway amino-acid biosynthesis; L-threonine biosynthesis; L-threonine from L-aspartate: step 2/5. In terms of biological role, catalyzes the NADPH-dependent formation of L-aspartate-semialdehyde (L-ASA) by the reductive dephosphorylation of L-aspartyl-4-phosphate. In Bordetella pertussis (strain Tohama I / ATCC BAA-589 / NCTC 13251), this protein is Aspartate-semialdehyde dehydrogenase.